Reading from the N-terminus, the 253-residue chain is MFSSYSLCKCLVSFHILAIQVLISCASSLNLTNEYLNHKCRKYQPGSEYEKELNTLSRRVATLDFTDGFTHRSNSRDTKSVTIIFQCRGDSYRSKCNSCYATALAGFRSRCPRNKGGIIWYDQCFLDVSMINDNSPRRMNYDNIFSMHNPNNVRGNVNSFNKKTTEFLYKLIGKADRLDVDGINFLYYAAGEMRLGKQTLFAMVQCAKDILSCKDCLEWSIKELSKCCDGKQGARVVGTICNLRYELYPFLRT.

The first 28 residues, 1–28 (MFSSYSLCKCLVSFHILAIQVLISCASS), serve as a signal peptide directing secretion. Gnk2-homologous domains follow at residues 34–133 (EYLN…MIND) and 141–250 (YDNI…LYPF).

This sequence belongs to the cysteine-rich repeat secretory protein family.

It is found in the secreted. This chain is Putative cysteine-rich repeat secretory protein 33 (CRRSP33), found in Arabidopsis thaliana (Mouse-ear cress).